The following is a 199-amino-acid chain: Probable molybdenum cofactor guanylyltransferase (199 aa).

Residues 9 to 11 (LAG), lysine 21, aspartate 69, and aspartate 100 contribute to the GTP site. A Mg(2+)-binding site is contributed by aspartate 100.

It belongs to the MobA family. Requires Mg(2+) as cofactor.

It is found in the cytoplasm. The enzyme catalyses Mo-molybdopterin + GTP + H(+) = Mo-molybdopterin guanine dinucleotide + diphosphate. Its function is as follows. Transfers a GMP moiety from GTP to Mo-molybdopterin (Mo-MPT) cofactor (Moco or molybdenum cofactor) to form Mo-molybdopterin guanine dinucleotide (Mo-MGD) cofactor. This is Probable molybdenum cofactor guanylyltransferase from Bacillus cytotoxicus (strain DSM 22905 / CIP 110041 / 391-98 / NVH 391-98).